The sequence spans 437 residues: Chromosomal replication initiator protein DnaA (437 aa).

The tract at residues 1-74 (MNLAWNKILE…EACGDKIPVE (74 aa)) is domain I, interacts with DnaA modulators. Residues 74 to 98 (EILIETKATSPLQSFLEKSFDQKDF) are domain II. The tract at residues 99–315 (QFNPDYTFET…GALNDIYLYK (217 aa)) is domain III, AAA+ region. The ATP site is built by Gly-142, Gly-144, Lys-145, and Thr-146. Residues 316 to 437 (KSYSLLFLNL…ERISSKYKLQ (122 aa)) are domain IV, binds dsDNA.

This sequence belongs to the DnaA family. In terms of assembly, oligomerizes as a right-handed, spiral filament on DNA at oriC.

It localises to the cytoplasm. In terms of biological role, plays an essential role in the initiation and regulation of chromosomal replication. ATP-DnaA binds to the origin of replication (oriC) to initiate formation of the DNA replication initiation complex once per cell cycle. Binds the DnaA box (a 9 base pair repeat at the origin) and separates the double-stranded (ds)DNA. Forms a right-handed helical filament on oriC DNA; dsDNA binds to the exterior of the filament while single-stranded (ss)DNA is stabiized in the filament's interior. The ATP-DnaA-oriC complex binds and stabilizes one strand of the AT-rich DNA unwinding element (DUE), permitting loading of DNA polymerase. After initiation quickly degrades to an ADP-DnaA complex that is not apt for DNA replication. Binds acidic phospholipids. This Leptospira borgpetersenii serovar Hardjo-bovis (strain JB197) protein is Chromosomal replication initiator protein DnaA.